A 613-amino-acid chain; its full sequence is Ribosome-associated molecular chaperone SSB1 (613 aa).

A nucleotide binding domain (NBD) region spans residues 1–391 (MADGVFQGAI…ILTGQSTSDE (391 aa)). ATP contacts are provided by residues 16–18 (TTY), Lys73, 205–207 (GGT), 271–278 (ERAKRTLS), and Gly342. The interval 392-402 (TKDLLLLDVAP) is inter-domain linker. The substrate binding domain (SBD) stretch occupies residues 403 to 613 (LSLGVGMQGD…RVVTKAMSSR (211 aa)). Residues 516–612 (SEDIEKMVNQ…KRVVTKAMSS (97 aa)) form a lid domain (SBDalpha) region. A Nuclear export signal motif is present at residues 574–582 (IEAALADAL).

It belongs to the heat shock protein 70 family. Ssb-type Hsp70 subfamily. As to quaternary structure, binds to ribosomes. Binds close to the ribosomal tunnel exit via contacts with both ribosomal proteins and rRNA. Directly interacts with nascent polypeptides. This interaction is dependent on the ribosome-associated complex (RAC). Interacts with SSE1. Interacts with FES1.

The protein localises to the cytoplasm. It catalyses the reaction ATP + H2O = ADP + phosphate + H(+). Ribosome-bound, Hsp70-type chaperone that assists in the cotranslational folding of newly synthesized proteins in the cytosol. Stimulates folding by interacting with nascent chains, binding to short, largely hydrophobic sequences exposed by unfolded proteins, thereby stabilizing longer, more slowly translated, and aggregation-prone nascent polypeptides and domains that cannot fold stably until fully synthesized. The Hsp70-protein substrate interaction depends on ATP-binding and on allosteric regulation between the NBD and the SBD. The ATP-bound state is characterized by a fast exchange rate of substrate (low affinity state), while in the ADP-bound state exchange is much slower (high affinity state). During the Hsp70 cycle, the chaperone switches between the ATP-bound state (open conformation) and the ADP-bound state (closed conformation) by major conformational rearrangements involving mainly the lid domain. Ssb cooperates with a specific Hsp40/Hsp70 co-chaperone termed the ribosome-associated complex (RAC), which stimulates the ATPase activity of the ribosome-associated pool of Ssbs and switches it to the high affinity substrate binding state. Hsp110 chaperone SSE1 and FES1 act as nucleotide exchange factors that cause substrate release. This is Ribosome-associated molecular chaperone SSB1 (SSB1) from Nakaseomyces delphensis (Yeast).